Reading from the N-terminus, the 422-residue chain is Serine--tRNA ligase (422 aa).

Residues 1-20 (MHDLKSIRDNPDGFDAGLKR) are disordered. Residue 229-231 (TAE) coordinates L-serine. 260–262 (RSE) is an ATP binding site. Position 283 (E283) interacts with L-serine. Position 347–350 (347–350 (EISS)) interacts with ATP. An L-serine-binding site is contributed by S383.

This sequence belongs to the class-II aminoacyl-tRNA synthetase family. Type-1 seryl-tRNA synthetase subfamily. As to quaternary structure, homodimer. The tRNA molecule binds across the dimer.

The protein localises to the cytoplasm. The catalysed reaction is tRNA(Ser) + L-serine + ATP = L-seryl-tRNA(Ser) + AMP + diphosphate + H(+). The enzyme catalyses tRNA(Sec) + L-serine + ATP = L-seryl-tRNA(Sec) + AMP + diphosphate + H(+). It functions in the pathway aminoacyl-tRNA biosynthesis; selenocysteinyl-tRNA(Sec) biosynthesis; L-seryl-tRNA(Sec) from L-serine and tRNA(Sec): step 1/1. In terms of biological role, catalyzes the attachment of serine to tRNA(Ser). Is also able to aminoacylate tRNA(Sec) with serine, to form the misacylated tRNA L-seryl-tRNA(Sec), which will be further converted into selenocysteinyl-tRNA(Sec). This chain is Serine--tRNA ligase, found in Paramagnetospirillum magneticum (strain ATCC 700264 / AMB-1) (Magnetospirillum magneticum).